The chain runs to 3527 residues: BEACH domain-containing protein A2 (3527 aa).

Disordered stretches follow at residues 25 to 46, 385 to 423, and 454 to 490; these read AGEA…PSSS, SSPH…LNSR, and ESSG…CEQG. Residues 28–46 are compositionally biased toward low complexity; it reads AISDPTTPPSSSQASPSSS. The segment covering 455-469 has biased composition (low complexity); sequence SSGTSTSLLSQTKLT. Polar residues predominate over residues 472 to 481; that stretch reads SRRQTPSANN. LRR repeat units lie at residues 1447–1470, 1499–1522, 1542–1565, 1566–1588, and 2001–2024; these read KLES…NYED, FSHL…VLSN, SIQI…SHNL, AILR…DVEV, and SSEM…SRSS. Disordered regions lie at residues 1992–2023 and 2046–2081; these read GDHV…DSRS and IPSP…SQGS. The segment covering 1998–2020 has biased composition (polar residues); it reads VSASSEMKSLDLTGSSSQVQPID. LRR repeat units follow at residues 2128–2151, 2221–2247, and 2313–2336; these read TEQI…VDPE, LLSI…LLSI, and VSAV…LDTD. The tract at residues 2658–2680 is disordered; sequence VNTDEKSETGSPIKSSSGKMDEI. Residues 2666 to 2675 show a composition bias toward polar residues; that stretch reads TGSPIKSSSG. The 168-residue stretch at 2704-2871 folds into the BEACH-type PH domain; it reads EHLEKIRFRY…EREEVFRNLL (168 aa). In terms of domain architecture, BEACH spans 2896-3188; the sequence is GSRLFKLMAK…QLFQKPHVKR (293 aa). WD repeat units follow at residues 3272 to 3311, 3322 to 3361, 3410 to 3451, and 3483 to 3522; these read HEGN…PRGS, AHTA…FVRQ, DLIV…DPVS, and FHKQ…LKAS.

This chain is BEACH domain-containing protein A2, found in Arabidopsis thaliana (Mouse-ear cress).